We begin with the raw amino-acid sequence, 285 residues long: Bark agglutinin I polypeptide A (285 aa).

The first 31 residues, 1-31, serve as a signal peptide directing secretion; sequence MTSYNFKTQTSFPLLLSISFFFLLLLNKVNS. N-linked (GlcNAc...) asparagine glycosylation occurs at Asn-147. Mn(2+) is bound by residues Glu-156 and Asp-158. Asp-158, Phe-160, Asn-162, and Asp-166 together coordinate Ca(2+). The Mn(2+) site is built by Asp-166 and His-171. N-linked (GlcNAc...) asparagine glycosylation is present at Asn-188.

This sequence belongs to the leguminous lectin family. In terms of assembly, RPbAI is composed of two polypeptides, A and B, that associate into five different tetrameric isolectins. The A4 combination is the only one devoid of agglutination activity. Isoform B4 displays maximal agglutination activity. As to expression, strong expression in seed. Lower levels in the flower, and the bark of the roots. No expression in leaf. The lectin accumulates in the inner bark in autumn.

Functionally, N-acetyl-D-galactosamine specific lectin. Bark lectins are storage protein that probably maintains stocks of nitrogen during dormant period. Self-aggregatable molecules that can bind their own carbohydrate side chains. They could also play a role in the plant's defense against phytophagous invertebrates or herbivorous higher animals. The polypeptide is Bark agglutinin I polypeptide A (Robinia pseudoacacia (Black locust)).